Consider the following 876-residue polypeptide: Probable DNA-directed RNA polymerase catalytic subunit (876 aa).

This sequence belongs to the RNA polymerase beta chain family. As to quaternary structure, interacts with LEF-4, LEF-9, and p47.

It carries out the reaction RNA(n) + a ribonucleoside 5'-triphosphate = RNA(n+1) + diphosphate. Its function is as follows. Component of the viral DNA-dependent RNA polymerase which is composed of four equimolar subunits of LEF-4, LEF-8, LEF-9, and p47. Plays an essential role in late and very late gene expression. The chain is Probable DNA-directed RNA polymerase catalytic subunit (LEF-8) from Autographa californica nuclear polyhedrosis virus (AcMNPV).